The sequence spans 96 residues: uncharacterized protein (96 aa).

Residues 13–35 form a helical membrane-spanning segment; sequence PVVRYVVALLHWLLWRVVVIIAI.

Its subcellular location is the membrane. This is an uncharacterized protein from Archaeoglobus fulgidus (strain ATCC 49558 / DSM 4304 / JCM 9628 / NBRC 100126 / VC-16).